The following is a 59-amino-acid chain: UPF0434 protein Shew_1640 (59 aa).

The protein belongs to the UPF0434 family.

The protein is UPF0434 protein Shew_1640 of Shewanella loihica (strain ATCC BAA-1088 / PV-4).